The chain runs to 184 residues: Threonylcarbamoyl-AMP synthase (184 aa).

The 182-residue stretch at 3–184 (AWFIQKAVSV…DAATGAILRQ (182 aa)) folds into the YrdC-like domain.

It belongs to the SUA5 family. TsaC subfamily.

Its subcellular location is the cytoplasm. The enzyme catalyses L-threonine + hydrogencarbonate + ATP = L-threonylcarbamoyladenylate + diphosphate + H2O. In terms of biological role, required for the formation of a threonylcarbamoyl group on adenosine at position 37 (t(6)A37) in tRNAs that read codons beginning with adenine. Catalyzes the conversion of L-threonine, HCO(3)(-)/CO(2) and ATP to give threonylcarbamoyl-AMP (TC-AMP) as the acyladenylate intermediate, with the release of diphosphate. The chain is Threonylcarbamoyl-AMP synthase from Hahella chejuensis (strain KCTC 2396).